A 966-amino-acid chain; its full sequence is Mitogen-activated protein kinase kinase kinase 13 (966 aa).

2 disordered regions span residues 1–22 and 93–112; these read MANF…SESK and SEMA…STSG. Residues 96–112 are compositionally biased toward polar residues; it reads AVSQGNSNTVDAESTSG. Residues 168-409 enclose the Protein kinase domain; that stretch reads ISELQWLGSG…FRQTLMHLDI (242 aa). ATP contacts are provided by residues 174–182 and Lys195; that span reads LGSGAQGAV. Residue Asp279 is the Proton acceptor of the active site. Leucine-zipper stretches follow at residues 433-454 and 486-507; these read VKKH…DEEL and LSAI…EQAV. Disordered regions lie at residues 534–652, 744–834, 846–873, and 887–906; these read KRKG…SQSH, DIPS…RRQR, STFS…PDEL, and DLLS…SDGL. Positions 567–581 are enriched in low complexity; that stretch reads SPLSGSPKMSTSSSK. Residues 582-594 show a composition bias toward basic residues; that stretch reads SRYRSKPRHRRGN. Polar residues-rich tracts occupy residues 609 to 629 and 781 to 795; these read QPAQ…SQYP and FSSC…TSHL. A compositionally biased stretch (acidic residues) spans 814-827; that stretch reads DSSEEEEGEVDSEV. The tract at residues 815–828 is acidic; the sequence is SSEEEEGEVDSEVE. Residues 846-855 are compositionally biased toward polar residues; sequence STFSSENFSV.

It belongs to the protein kinase superfamily. STE Ser/Thr protein kinase family. MAP kinase kinase kinase subfamily. Homodimer; forms dimers through the leucine-zipper motif. Interacts with the C-terminus of MAPK8IP1 through the kinase catalytic domain. Binds PRDX3. Associates with the IKK complex through the kinase domain. It depends on Mg(2+) as a cofactor. Post-translationally, autophosphorylated on serine and threonine residues.

The protein resides in the cytoplasm. The protein localises to the membrane. The enzyme catalyses L-seryl-[protein] + ATP = O-phospho-L-seryl-[protein] + ADP + H(+). It carries out the reaction L-threonyl-[protein] + ATP = O-phospho-L-threonyl-[protein] + ADP + H(+). With respect to regulation, activated by autophosphorylation and homodimerization. In terms of biological role, activates the JUN N-terminal pathway through activation of the MAP kinase kinase MAP2K7. Acts synergistically with PRDX3 to regulate the activation of NF-kappa-B in the cytosol. This activation is kinase-dependent and involves activating the IKK complex, the IKBKB-containing complex that phosphorylates inhibitors of NF-kappa-B. This chain is Mitogen-activated protein kinase kinase kinase 13, found in Pongo abelii (Sumatran orangutan).